The following is a 324-amino-acid chain: Probable UDP-sugar transporter protein SLC35A4 (324 aa).

Topologically, residues 1–18 (MSVEDGGMPGLSRPRQAR) are cytoplasmic. Residues 19-39 (WTLMLLLSTAMYGAHAPLLAL) traverse the membrane as a helical segment. Topologically, residues 40 to 52 (CHVDGRVPFRPSS) are lumenal. The chain crosses the membrane as a helical span at residues 53 to 73 (AVLLTELTKLLLCAFSLLVGW). The Cytoplasmic portion of the chain corresponds to 74–85 (QAWPQGAPPWRQ). Residues 86-106 (AAPFALSALLYGANNNLVIYL) traverse the membrane as a helical segment. The Lumenal portion of the chain corresponds to 107-142 (QRYMDPSTYQVLSNLKIGSTAVLYCLCLRHRLSVRQ). A helical membrane pass occupies residues 143–163 (GLALLLLMAAGACYAAGGLQV). Residues 164–180 (PGNTLPRPPPAAAASPM) lie on the Cytoplasmic side of the membrane. The helical transmembrane segment at 181–201 (PLHITPLGLLLLILYCLISGL) threads the bilayer. Residues 202-214 (SSVYTELLMKRQQ) lie on the Lumenal side of the membrane. The helical transmembrane segment at 215–235 (LPLALQNLFLYTFGVLLNLGL) threads the bilayer. Over 236-250 (HAGGGPGPGLLEGFS) the chain is Cytoplasmic. Residues 251 to 271 (GWAALVVLSQALNGLLMSVVM) traverse the membrane as a helical segment. At 272–275 (KHGS) the chain is on the lumenal side. The chain crosses the membrane as a helical span at residues 276-298 (SITRLFVVSCSLVVNAVLSAVLL). The Cytoplasmic portion of the chain corresponds to 299–324 (RLQLTAAFFLATLLIGLAMRLYYGSR).

The protein belongs to the nucleotide-sugar transporter family. SLC35A subfamily. Found in a complex with SLC35A2 and SLC35A3.

It is found in the golgi apparatus membrane. The enzyme catalyses CDP-L-ribitol(in) + CDP(out) = CDP-L-ribitol(out) + CDP(in). Functionally, mediates the transport of CDP-ribitol. Does not exhibit CMP-sialic acid, UDP-galactose and UDP-N-acetylglucosamine transport activity. The polypeptide is Probable UDP-sugar transporter protein SLC35A4 (Pongo abelii (Sumatran orangutan)).